A 207-amino-acid polypeptide reads, in one-letter code: ATP-dependent Clp protease proteolytic subunit 2 (207 aa).

The active-site Nucleophile is serine 102. The active site involves histidine 127.

Belongs to the peptidase S14 family. In terms of assembly, fourteen ClpP subunits assemble into 2 heptameric rings which stack back to back to give a disk-like structure with a central cavity, resembling the structure of eukaryotic proteasomes.

Its subcellular location is the cytoplasm. It catalyses the reaction Hydrolysis of proteins to small peptides in the presence of ATP and magnesium. alpha-casein is the usual test substrate. In the absence of ATP, only oligopeptides shorter than five residues are hydrolyzed (such as succinyl-Leu-Tyr-|-NHMec, and Leu-Tyr-Leu-|-Tyr-Trp, in which cleavage of the -Tyr-|-Leu- and -Tyr-|-Trp bonds also occurs).. Functionally, cleaves peptides in various proteins in a process that requires ATP hydrolysis. Has a chymotrypsin-like activity. Plays a major role in the degradation of misfolded proteins. This Bifidobacterium longum (strain NCC 2705) protein is ATP-dependent Clp protease proteolytic subunit 2.